A 72-amino-acid polypeptide reads, in one-letter code: Translation initiation factor IF-1 (72 aa).

Positions 1–72 (MSKEEVLEFS…TKGRITYRYK (72 aa)) constitute an S1-like domain.

It belongs to the IF-1 family. As to quaternary structure, component of the 30S ribosomal translation pre-initiation complex which assembles on the 30S ribosome in the order IF-2 and IF-3, IF-1 and N-formylmethionyl-tRNA(fMet); mRNA recruitment can occur at any time during PIC assembly.

Its subcellular location is the cytoplasm. In terms of biological role, one of the essential components for the initiation of protein synthesis. Stabilizes the binding of IF-2 and IF-3 on the 30S subunit to which N-formylmethionyl-tRNA(fMet) subsequently binds. Helps modulate mRNA selection, yielding the 30S pre-initiation complex (PIC). Upon addition of the 50S ribosomal subunit IF-1, IF-2 and IF-3 are released leaving the mature 70S translation initiation complex. This chain is Translation initiation factor IF-1, found in Bartonella bacilliformis (strain ATCC 35685 / KC583 / Herrer 020/F12,63).